Here is a 130-residue protein sequence, read N- to C-terminus: Small ribosomal subunit protein eS6 (130 aa).

This sequence belongs to the eukaryotic ribosomal protein eS6 family.

The sequence is that of Small ribosomal subunit protein eS6 from Methanosphaera stadtmanae (strain ATCC 43021 / DSM 3091 / JCM 11832 / MCB-3).